Reading from the N-terminus, the 401-residue chain is ATP-dependent RNA helicase eIF4A (401 aa).

The Q motif signature appears at 28–56 (DNFDDMKLKGELLRGIYAYGFERPSAIQQ). The Helicase ATP-binding domain occupies 59–229 (IMPIVTGRDC…KKFMRDPIRI (171 aa)). 72–79 (AQSGTGKT) provides a ligand contact to ATP. The short motif at 177–180 (DEAD) is the DEAD box element. Positions 240–401 (GIRQFYINVE…EMPLNVADLI (162 aa)) constitute a Helicase C-terminal domain.

Belongs to the DEAD box helicase family. eIF4A subfamily. As to quaternary structure, component of the eIF4F complex, which composition varies with external and internal environmental conditions. It is composed of at least eIF4A, eIF4E and eIF4G.

It localises to the cytoplasm. It catalyses the reaction ATP + H2O = ADP + phosphate + H(+). Functionally, ATP-dependent RNA helicase which is a subunit of the eIF4F complex involved in cap recognition and is required for mRNA binding to ribosome. In the current model of translation initiation, eIF4A unwinds RNA secondary structures in the 5'-UTR of mRNAs which is necessary to allow efficient binding of the small ribosomal subunit, and subsequent scanning for the initiator codon. This is ATP-dependent RNA helicase eIF4A (TIF1) from Cryptococcus neoformans var. neoformans serotype D (strain B-3501A) (Filobasidiella neoformans).